The sequence spans 130 residues: Small ribosomal subunit protein uS9 (130 aa).

It belongs to the universal ribosomal protein uS9 family.

This Teredinibacter turnerae (strain ATCC 39867 / T7901) protein is Small ribosomal subunit protein uS9.